A 216-amino-acid polypeptide reads, in one-letter code: Redox-sensing transcriptional repressor Rex (216 aa).

The segment at residues K15 to I54 is a DNA-binding region (H-T-H motif). G89–G94 lines the NAD(+) pocket.

This sequence belongs to the transcriptional regulatory Rex family. In terms of assembly, homodimer.

The protein localises to the cytoplasm. Its function is as follows. Modulates transcription in response to changes in cellular NADH/NAD(+) redox state. The chain is Redox-sensing transcriptional repressor Rex from Rubrobacter xylanophilus (strain DSM 9941 / JCM 11954 / NBRC 16129 / PRD-1).